The following is a 225-amino-acid chain: Small ribosomal subunit protein L51-b (225 aa).

Residues 1–84 constitute a mitochondrion transit peptide; sequence MKFPDLLRCS…QCAFISSDRF (84 aa).

The protein belongs to the bacterial ribosomal protein bS1 family. As to quaternary structure, component of the mitochondrial small ribosomal subunit (mt-SSU). Mature yeast 74S mitochondrial ribosomes consist of a small (37S) and a large (54S) subunit. The 37S small subunit contains a 15S ribosomal RNA (15S mt-rRNA) and at least 32 different proteins. The 54S large subunit contains a 21S rRNA (21S mt-rRNA) and at least 45 different proteins. This subunit is mutually exclusive with mrp51/small ribosomal subunit protein bS1m.

It localises to the mitochondrion. In terms of biological role, component of the mitochondrial ribosome (mitoribosome), a dedicated translation machinery responsible for the synthesis of mitochondrial genome-encoded proteins, including at least some of the essential transmembrane subunits of the mitochondrial respiratory chain. The mitoribosomes are attached to the mitochondrial inner membrane and translation products are cotranslationally integrated into the membrane. Functionally interacts with the 5'-UTR of mitochondrial mRNAs. Specifically plays a role in the translation of cob1/cytochrome b and cox3. Has a role in meiosis. This Schizosaccharomyces pombe (strain 972 / ATCC 24843) (Fission yeast) protein is Small ribosomal subunit protein L51-b.